The sequence spans 338 residues: Uroporphyrinogen decarboxylase (338 aa).

Residues 25–29 (RQAGR), Phe44, Asp75, Tyr146, Ser201, and His314 contribute to the substrate site.

It belongs to the uroporphyrinogen decarboxylase family. Homodimer.

The protein resides in the cytoplasm. It carries out the reaction uroporphyrinogen III + 4 H(+) = coproporphyrinogen III + 4 CO2. Its pathway is porphyrin-containing compound metabolism; protoporphyrin-IX biosynthesis; coproporphyrinogen-III from 5-aminolevulinate: step 4/4. Functionally, catalyzes the decarboxylation of four acetate groups of uroporphyrinogen-III to yield coproporphyrinogen-III. This chain is Uroporphyrinogen decarboxylase, found in Aquifex aeolicus (strain VF5).